Reading from the N-terminus, the 276-residue chain is NH(3)-dependent NAD(+) synthetase (276 aa).

ATP is bound at residue 43–50; sequence GISGGVDS. Aspartate 49 is a binding site for Mg(2+). Arginine 146 contacts deamido-NAD(+). Threonine 166 is a binding site for ATP. Glutamate 171 is a Mg(2+) binding site. Deamido-NAD(+)-binding residues include lysine 179 and aspartate 186. ATP-binding residues include lysine 195 and threonine 217. 266 to 267 lines the deamido-NAD(+) pocket; sequence HK.

This sequence belongs to the NAD synthetase family. Homodimer.

The enzyme catalyses deamido-NAD(+) + NH4(+) + ATP = AMP + diphosphate + NAD(+) + H(+). It participates in cofactor biosynthesis; NAD(+) biosynthesis; NAD(+) from deamido-NAD(+) (ammonia route): step 1/1. In terms of biological role, catalyzes the ATP-dependent amidation of deamido-NAD to form NAD. Uses ammonia as a nitrogen source. The chain is NH(3)-dependent NAD(+) synthetase from Vibrio atlanticus (strain LGP32) (Vibrio splendidus (strain Mel32)).